The primary structure comprises 875 residues: Serrate RNA effector molecule homolog (875 aa).

The segment at 1–90 is disordered; that stretch reads MGDSDDEYDR…RRDWDEHSSD (90 aa). Gly2 carries the N-acetylglycine modification. At Ser4 the chain carries Phosphoserine. At Tyr8 the chain carries Phosphotyrosine. A compositionally biased stretch (basic and acidic residues) spans 8–73; the sequence is YDRRRRDKFR…ERFSPPRHEL (66 aa). Phosphoserine occurs at positions 67, 74, and 136. A Glycyl lysine isopeptide (Lys-Gly) (interchain with G-Cter in SUMO2) cross-link involves residue Lys150. A disordered region spans residues 272–411; the sequence is EEEEQAGKTG…KPKDAAGLEC (140 aa). Over residues 297–345 the composition is skewed to basic and acidic residues; the sequence is EGERKANDKDEKKEDGKQAENDSSNDDKTKKSEGDGDKEEKKEEAEKEA. A compositionally biased stretch (acidic residues) spans 369–386; sequence SESESEGGQAEEEKEEAE. Positions 387–411 are enriched in basic and acidic residues; it reads EALKEKEKPKEEEKEKPKDAAGLEC. Ser492 and Ser539 each carry phosphoserine. Residue Thr543 is modified to Phosphothreonine. Phosphoserine is present on Ser569. Residues 571-597 form a disordered region; that stretch reads EEEELLGSSGGPPPEEPPKEGNPAEIN. Thr670 is subject to Phosphothreonine. The residue at position 678 (Ser678) is a Phosphoserine. Omega-N-methylarginine occurs at positions 832, 839, and 849. Residues 834–853 are disordered; the sequence is NYDAFRGQGGYPGKPRNRMV.

It belongs to the ARS2 family. As to quaternary structure, interacts with CASP8AP2 and ERBB4. Interacts with NCBP1/CBP80 and DROSHA. Interacts with LUZP4. Interacts with NCBP2/CBP20 and NCBP3. Interacts with MTREX. In terms of tissue distribution, widely expressed, with a preference for proliferating cells. Highly expressed in hematopoietic tissues and reduced or absent expression in parenchymal organs like liver and kidney. In the brain, expressed in the subventricular zone by niche astrocytes, ependymal cells and neural stem cells. In this cerebral context, expressed in slowly dividing cells.

It localises to the nucleus. It is found in the nucleoplasm. The protein resides in the cytoplasm. Its function is as follows. Acts as a mediator between the cap-binding complex (CBC) and the primary microRNAs (miRNAs) processing machinery during cell proliferation. Contributes to the stability and delivery of capped primary miRNA transcripts to the primary miRNA processing complex containing DGCR8 and DROSHA, thereby playing a role in RNA-mediated gene silencing (RNAi) by miRNAs. Binds capped RNAs (m7GpppG-capped RNA); however interaction is probably mediated via its interaction with NCBP1/CBP80 component of the CBC complex. Involved in cell cycle progression at S phase. Does not directly confer arsenite resistance but rather modulates arsenic sensitivity. Independently of its activity on miRNAs, necessary and sufficient to promote neural stem cell self-renewal. Does so by directly binding SOX2 promoter and positively regulating its transcription. The sequence is that of Serrate RNA effector molecule homolog (Srrt) from Mus musculus (Mouse).